Here is a 190-residue protein sequence, read N- to C-terminus: Zinc metalloproteinase/disintegrin (190 aa).

In terms of domain architecture, Peptidase M12B spans 1-11; it reads NHNPECIVNEP. Residues 19-105 form the Disintegrin domain; that stretch reads PPVCGNELLE…ECPADVFHKN (87 aa). Residues valine 21, asparagine 24, leucine 26, glutamate 28, glutamate 31, and aspartate 34 each coordinate Ca(2+). Intrachain disulfides connect cysteine 33/cysteine 51, cysteine 35/cysteine 46, cysteine 45/cysteine 68, cysteine 59/cysteine 65, cysteine 64/cysteine 90, and cysteine 77/cysteine 97. Residues 83 to 85 carry the D/ECD-tripeptide motif; that stretch reads ECD. The Ca(2+) site is built by aspartate 85, proline 86, glutamate 88, aspartate 100, and valine 101. Positions 104–190 are excised as a propeptide; that stretch reads KNGQPCLDNY…DNSPGQNGPC (87 aa).

It belongs to the venom metalloproteinase (M12B) family. P-III subfamily. In terms of assembly, monomer. It depends on Zn(2+) as a cofactor. In terms of tissue distribution, expressed by the venom gland.

It is found in the secreted. Impairs hemostasis in the envenomed animal. In terms of biological role, inhibits platelet aggregation induced by ADP, thrombin, platelet-activating factor and collagen. Acts by inhibiting fibrinogen interaction with platelet receptors GPIIb/GPIIIa (ITGA2B/ITGB3). The protein is Zinc metalloproteinase/disintegrin of Gloydius brevicauda (Korean slamosa snake).